The chain runs to 590 residues: Zinc finger protein 285 (590 aa).

The region spanning 8–86 (VTFKDVAVVF…WKQRIRDLTV (79 aa)) is the KRAB domain. The C2H2-type 1 zinc finger occupies 232–254 (FPCNNCGVAFADDTDPHVHHSTH). A C2H2-type 2; degenerate zinc finger spans residues 260 to 282 (YKCDQYGKNFSQSQDLIVHCKTH). C2H2-type zinc fingers lie at residues 316–338 (YKCK…HRVH), 344–366 (YKCD…QGVH), 372–394 (YKCE…QRVH), 400–422 (YKCS…WRFH), 428–450 (YRCG…QRVH), 456–478 (YKCN…QRVH), 484–506 (YKCE…QRDH), 512–534 (YKCD…LRVH), and 540–562 (YKCK…QRVH).

It belongs to the krueppel C2H2-type zinc-finger protein family.

The protein localises to the nucleus. In terms of biological role, may be involved in transcriptional regulation. The polypeptide is Zinc finger protein 285 (ZNF285) (Homo sapiens (Human)).